Here is a 714-residue protein sequence, read N- to C-terminus: Rho-GTPase-activating protein RGD2 (714 aa).

The F-BAR domain maps to 2 to 441 (LSFCDYFWSE…LENDIDPTAD (440 aa)). Positions 218-298 (PKTDYKLPLI…WKNTAYMFAN (81 aa)) constitute a DEP domain. The Rho-GAP domain occupies 475–704 (VDLETRCRLD…DLLTHKKQIF (230 aa)).

Interacts with CDC42 and RHO5.

Functionally, acts in signal transduction. Activates CDC42 and RHO5. This chain is Rho-GTPase-activating protein RGD2 (RGD2), found in Saccharomyces cerevisiae (strain ATCC 204508 / S288c) (Baker's yeast).